A 440-amino-acid chain; its full sequence is Calcium/calmodulin-regulated receptor-like kinase 1 (440 aa).

A helical transmembrane segment spans residues 8 to 28 (LIVGISLGLVIGVVLAISALF). Residues 28–228 (FCFRYHRKKS…ARGLEYLHDG (201 aa)) are calmodulin binding. The Protein kinase domain maps to 113 to 380 (CNFTTLIGQG…DIVQVLTRVI (268 aa)). Residues 119–127 (IGQGAFGPV) and Lys-141 contribute to the ATP site. The residue at position 186 (Tyr-186) is a Phosphotyrosine. Residue Asp-237 is the Proton acceptor of the active site. Ser-241 is modified (phosphoserine). Thr-274 bears the Phosphothreonine mark. Phosphotyrosine is present on Tyr-282. The tract at residues 369-440 (MRDIVQVLTR…DSSIAEDVIL (72 aa)) is calmodulin binding. Residues 386–427 (RKRQKNSPSPSPRLPPPPPIVEESEGELTANGSLRSEIHRRD) form a disordered region. The segment covering 394–405 (SPSPRLPPPPPI) has biased composition (pro residues).

The protein belongs to the protein kinase superfamily. Ser/Thr protein kinase family. Interacts with calmodulin (CaM) in a calcium- (Ca(2+)-) dependent manner. Binds to MEKK1. Similar transcript expression levels in seedlings, roots, leaves, stems and flowers, and lower levels in siliques, but protein accumulates mostly in 7-day-old seedlings, old roots and young leaves and, to a lower extent, in young roots, old leaves, flowers and siliques (at protein level).

The protein localises to the cell membrane. It localises to the endosome membrane. It catalyses the reaction L-seryl-[protein] + ATP = O-phospho-L-seryl-[protein] + ADP + H(+). The catalysed reaction is L-threonyl-[protein] + ATP = O-phospho-L-threonyl-[protein] + ADP + H(+). Kinase activity is stimulated by calcium/calmodulin, but blocked by chlorpromazine. Required for cold tolerance, via the activation of MAP kinases activity. Phosphorylates and activates MEKK1 in response to cold in a calcium-dependent manner. In Arabidopsis thaliana (Mouse-ear cress), this protein is Calcium/calmodulin-regulated receptor-like kinase 1.